The chain runs to 865 residues: Leucine--tRNA ligase (865 aa).

Positions 36 to 46 (PYPSGKIHMGH) match the 'HIGH' region motif. The 'KMSKS' region signature appears at 608–612 (KMSKS). Residue lysine 611 participates in ATP binding.

Belongs to the class-I aminoacyl-tRNA synthetase family.

It localises to the cytoplasm. It carries out the reaction tRNA(Leu) + L-leucine + ATP = L-leucyl-tRNA(Leu) + AMP + diphosphate. This Wolbachia sp. subsp. Brugia malayi (strain TRS) protein is Leucine--tRNA ligase.